The following is a 969-amino-acid chain: Proprotein convertase subtilisin/kexin type 6 (969 aa).

A compositionally biased stretch (pro residues) spans 1–16 (MPPRAPPAPGPRPPPR). Positions 1-39 (MPPRAPPAPGPRPPPRAAAATDTAAGAGGAGGAGGAGGP) are disordered. The signal sequence occupies residues 1–63 (MPPRAPPAPG…LLALPAACSA (63 aa)). A compositionally biased stretch (gly residues) spans 26–39 (GAGGAGGAGGAGGP). Residues 64-149 (PPPRPVYTNH…QQEVKRRVKR (86 aa)) constitute a propeptide that is removed on maturation. Residues 168–487 (MWYLHCGDKN…FGLVDAEALV (320 aa)) enclose the Peptidase S8 domain. Active-site charge relay system residues include D205 and H246. An N-linked (GlcNAc...) asparagine glycan is attached at N259. Residue S420 is the Charge relay system of the active site. The P/Homo B domain maps to 495-635 (AVPSQHMCVA…SLILYGTAEH (141 aa)). The Cell attachment site signature appears at 553–555 (RGD). Positions 658-683 (EPPKAALSPSQVEVPEDEEDYTAQST) are disordered. FU repeat units follow at residues 692–739 (TSVC…GYFG), 743–790 (ARRC…GFYA), 794–838 (QKNC…GTYF), 842–887 (LIRC…GFYP), and 895–943 (HKVC…ETFC). The tract at residues 695-930 (CHPECGDKGC…GFTQLGTSCI (236 aa)) is CRM (Cys-rich motif). N-linked (GlcNAc...) asparagine glycans are attached at residues N914 and N932. Residues 931–969 (TNHTCSNADETFCEMVKSNRLCERKLFIQFCCRTCLLAG) enclose the PLAC domain.

This sequence belongs to the peptidase S8 family. As to quaternary structure, the PACE4A-I precursor protein seems to exist in the reticulum endoplasmic as both a monomer and a dimer-sized complex whereas mature PACE4A-I exists only as a monomer, suggesting that propeptide cleavage affects its tertiary or quaternary structure. Interacts (immature form including the propeptide) with RCN3; probably involved in the maturation and the secretion of PCSK6. Requires Ca(2+) as cofactor. In terms of tissue distribution, each PACE4 isoform exhibits a unique restricted distribution. Isoform PACE4A-I is expressed in heart, brain, placenta, lung, skeletal muscle, kidney, pancreas, but at comparatively higher levels in the liver. Isoform PACE4A-II is at least expressed in placenta. Isoform PACE4B was only found in the embryonic kidney cell line from which it was isolated. Isoform PACE4C and isoform PACE4D are expressed in placenta. Isoform PACE4E-I is expressed in cerebellum, placenta and pituitary. Isoform PACE4E-II is at least present in cerebellum.

The protein resides in the secreted. Its subcellular location is the endoplasmic reticulum. It localises to the endomembrane system. Functionally, serine endoprotease that processes various proproteins by cleavage at paired basic amino acids, recognizing the RXXX[KR]R consensus motif. Likely functions in the constitutive secretory pathway, with unique restricted distribution in both neuroendocrine and non-neuroendocrine tissues. The sequence is that of Proprotein convertase subtilisin/kexin type 6 (PCSK6) from Homo sapiens (Human).